A 296-amino-acid polypeptide reads, in one-letter code: MSWIERILGRTASSSSSSKSKVPEGVWTKCTNCEQVLYSEELKRNMQVCPKCDHHMRFDARTRLLSLLDQGSAEEIAANLEPQDILKFKDLKKYKDRLTAAQKQTGEKDAFITMFGTLYEMPIVVASFNFEFMGGSMGAVVGAKFVRAAEKALAENIPFICFSASGGARMQEALFSLMQMAKTSAILAKMREKGGPFISVLTDPTLGGVSASLAMLGDINIAEPKSLIGFAGPRVIEQTVREKLPEGFQRAEFLLEHGAIDMIVQRKDMRDTLARLCAKMTNQPSPFKVGELIIEE.

The CoA carboxyltransferase N-terminal domain occupies valine 26 to glutamate 295. Residues cysteine 30, cysteine 33, cysteine 49, and cysteine 52 each coordinate Zn(2+). Residues cysteine 30–cysteine 52 form a C4-type zinc finger.

This sequence belongs to the AccD/PCCB family. In terms of assembly, acetyl-CoA carboxylase is a heterohexamer composed of biotin carboxyl carrier protein (AccB), biotin carboxylase (AccC) and two subunits each of ACCase subunit alpha (AccA) and ACCase subunit beta (AccD). The cofactor is Zn(2+).

Its subcellular location is the cytoplasm. It catalyses the reaction N(6)-carboxybiotinyl-L-lysyl-[protein] + acetyl-CoA = N(6)-biotinyl-L-lysyl-[protein] + malonyl-CoA. Its pathway is lipid metabolism; malonyl-CoA biosynthesis; malonyl-CoA from acetyl-CoA: step 1/1. Functionally, component of the acetyl coenzyme A carboxylase (ACC) complex. Biotin carboxylase (BC) catalyzes the carboxylation of biotin on its carrier protein (BCCP) and then the CO(2) group is transferred by the transcarboxylase to acetyl-CoA to form malonyl-CoA. The chain is Acetyl-coenzyme A carboxylase carboxyl transferase subunit beta from Haemophilus ducreyi (strain 35000HP / ATCC 700724).